Reading from the N-terminus, the 544-residue chain is CTP synthase (544 aa).

An amidoligase domain region spans residues 1-265 (MTKFIFVTGG…DNIITEQLQL (265 aa)). S13 serves as a coordination point for CTP. Position 13 (S13) interacts with UTP. ATP contacts are provided by residues 14-19 (SLGKGI) and D71. Residues D71 and E139 each coordinate Mg(2+). CTP contacts are provided by residues 146–148 (DIE), 186–191 (KTKPTQ), and K222. Residues 186–191 (KTKPTQ) and K222 contribute to the UTP site. Positions 290–544 (KIAMVGKYVD…VKAALNNKKA (255 aa)) constitute a Glutamine amidotransferase type-1 domain. Residue G353 participates in L-glutamine binding. C380 functions as the Nucleophile; for glutamine hydrolysis in the catalytic mechanism. Residues 381 to 384 (LGMQ), E404, and R471 each bind L-glutamine. Residues H517 and E519 contribute to the active site.

Belongs to the CTP synthase family. As to quaternary structure, homotetramer.

The enzyme catalyses UTP + L-glutamine + ATP + H2O = CTP + L-glutamate + ADP + phosphate + 2 H(+). It catalyses the reaction L-glutamine + H2O = L-glutamate + NH4(+). The catalysed reaction is UTP + NH4(+) + ATP = CTP + ADP + phosphate + 2 H(+). It functions in the pathway pyrimidine metabolism; CTP biosynthesis via de novo pathway; CTP from UDP: step 2/2. Allosterically activated by GTP, when glutamine is the substrate; GTP has no effect on the reaction when ammonia is the substrate. The allosteric effector GTP functions by stabilizing the protein conformation that binds the tetrahedral intermediate(s) formed during glutamine hydrolysis. Inhibited by the product CTP, via allosteric rather than competitive inhibition. Functionally, catalyzes the ATP-dependent amination of UTP to CTP with either L-glutamine or ammonia as the source of nitrogen. Regulates intracellular CTP levels through interactions with the four ribonucleotide triphosphates. The protein is CTP synthase of Neisseria meningitidis serogroup C / serotype 2a (strain ATCC 700532 / DSM 15464 / FAM18).